We begin with the raw amino-acid sequence, 193 residues long: DNA dC-&gt;dU-editing enzyme APOBEC-3H (193 aa).

In terms of domain architecture, CMP/dCMP-type deaminase spans 24 to 126 (YRRKTYLCYQ…WKYQQGLRHL (103 aa)). A Zn(2+)-binding site is contributed by histidine 54. Glutamate 56 (proton donor) is an active-site residue. Zn(2+) contacts are provided by cysteine 85 and cysteine 88.

It belongs to the cytidine and deoxycytidylate deaminase family. As to quaternary structure, homodimer. It depends on Zn(2+) as a cofactor. In terms of tissue distribution, expressed in peripheral blood mononuclear cells.

It localises to the cytoplasm. The enzyme catalyses a 2'-deoxycytidine in single-stranded DNA + H2O + H(+) = a 2'-deoxyuridine in single-stranded DNA + NH4(+). DNA deaminase (cytidine deaminase) which acts as an inhibitor of retrovirus replication and retrotransposon mobility via deaminase-dependent and -independent mechanisms. Selectively targets single-stranded DNA and does not deaminate double-stranded DNA or single- or double-stranded RNA. Exhibits single-stranded DNA deaminase activity (in vitro). Incorporates into the released virions of the virion infectivity factor (vif)-deficient feline immunodeficiency virus (FIV) and suppresses FIV infectivity, probably in a deaminase-dependent manner (in vitro). Induces G-to-A hypermutations in vif-deficient FIV (in vitro). The APOBEC3H/APOBEC3Z3 haplotype 5 exhibits antiviral activity against vif-proficient FIV, strains Petaluma, C36 and Shizuoka (in vitro). Does not exhibit inhibitory activity against feline leukemia virus (FeLV), feline endogenous retrovirus (RD-114 virus) or a long interspersed nuclear element-1 (LINE-1) retrotransposon (in vitro). This chain is DNA dC-&gt;dU-editing enzyme APOBEC-3H, found in Felis catus (Cat).